Consider the following 243-residue polypeptide: Ornithine decarboxylase antizyme 3 (243 aa).

Phosphoserine is present on residues Ser-6, Ser-9, and Ser-12.

This sequence belongs to the ODC antizyme family. As to quaternary structure, interacts with ODC1 and thereby sterically blocks ODC homodimerization. Interacts with AZIN2; this interaction disrupts the interaction between the antizyme and ODC1. Interacts with GGN. In terms of tissue distribution, testis specific. Expressed throughout the differentiation process from spermatids to spermatozoa in the inner part of the seminiferous tubules.

It is found in the nucleus. Its subcellular location is the cytoplasm. Ornithine decarboxylase (ODC) antizyme protein that negatively regulates ODC activity and intracellular polyamine biosynthesis and uptake in response to increased intracellular polyamine levels. Binds to ODC monomers, inhibiting the assembly of the functional ODC homodimers. Does not target the ODC monomers for degradation, which allows a protein synthesis-independent restoration of ODC activity. Stabilizes AZIN2 by interfering with its ubiquitination. Involved in the translocation of AZNI2 from ER-Golgi intermediate compartment (ERGIC) to the cytosol. Probably plays a key role in spermatogenesis by regulating the intracellular concentration of polyamines in haploid germ cells. In Mus musculus (Mouse), this protein is Ornithine decarboxylase antizyme 3 (Oaz3).